A 555-amino-acid polypeptide reads, in one-letter code: Methionine--tRNA ligase (555 aa).

The 'HIGH' region signature appears at 13-23 (PYANGSLHIGH). Residues Cys-144, Cys-147, Cys-157, and Cys-160 each contribute to the Zn(2+) site. Positions 330-334 (KISKS) match the 'KMSKS' region motif. ATP is bound at residue Lys-333.

It belongs to the class-I aminoacyl-tRNA synthetase family. MetG type 1 subfamily. Monomer. The cofactor is Zn(2+).

The protein localises to the cytoplasm. The catalysed reaction is tRNA(Met) + L-methionine + ATP = L-methionyl-tRNA(Met) + AMP + diphosphate. Is required not only for elongation of protein synthesis but also for the initiation of all mRNA translation through initiator tRNA(fMet) aminoacylation. The chain is Methionine--tRNA ligase from Blochmanniella pennsylvanica (strain BPEN).